A 502-amino-acid chain; its full sequence is 4,4'-diapophytoene desaturase (4,4'-diaponeurosporene-forming) (502 aa).

Residue 5–17 (VIGAGVTGLAAAA) coordinates FAD.

It belongs to the carotenoid/retinoid oxidoreductase family. CrtN subfamily.

It catalyses the reaction 15-cis-4,4'-diapophytoene + 3 FAD + 3 H(+) = all-trans-4,4'-diaponeurosporene + 3 FADH2. It participates in carotenoid biosynthesis; staphyloxanthin biosynthesis; staphyloxanthin from farnesyl diphosphate: step 2/5. Its function is as follows. Involved in the biosynthesis of the yellow-orange carotenoid staphyloxanthin, which plays a role in the virulence via its protective function against oxidative stress. Catalyzes three successive dehydrogenation reactions that lead to the introduction of three double bonds into 4,4'-diapophytoene (dehydrosqualene), with 4,4'-diapophytofluene and 4,4'-diapo-zeta-carotene as intermediates, and 4,4'-diaponeurosporene (the major deep-yellow pigment in staphylococci strains) as the end product. This chain is 4,4'-diapophytoene desaturase (4,4'-diaponeurosporene-forming), found in Staphylococcus aureus (strain USA300).